The sequence spans 102 residues: Large ribosomal subunit protein bL21 (102 aa).

This sequence belongs to the bacterial ribosomal protein bL21 family. In terms of assembly, part of the 50S ribosomal subunit. Contacts protein L20.

This protein binds to 23S rRNA in the presence of protein L20. The polypeptide is Large ribosomal subunit protein bL21 (Neisseria meningitidis serogroup A / serotype 4A (strain DSM 15465 / Z2491)).